We begin with the raw amino-acid sequence, 447 residues long: MNAWEVNFDGLVGLTHHYAGLSFGNEASTRHRFQVSNPRLAAKQGLLKMKKLAGAGFPQAVIPPHERPFIPVLRQLGFSGSDEQVLEKVARQAPHWLSSVSSASPMWVANAATIAPSADTLDGKVHLTVANLNNKFHRSLEAPVTESLLKAIFNDEEKFSVHSALPQVALLGDEGAANHNRLGGHYGEPGMQIFVYGREEGNDTRPSRYPARQTREASEAVARLNQVNPQQVIFAQQNPDVIDQGVFHNDVIAVSNRQVLFCHQQAFARQSQLLANLRARVNGFMAIEVPATQVSVSDAVSTYLFNSQLLSRDDGSMVLVLPQECREHAGVWRYLNELLAADNPISELKVFDLRESMANGGGPACLRLRVVLTEEERRAVNPAVMMNDTLFNALNDWVDRYYRDRLTAADLADPQLLREGREALDTLTQLLDLGSVYPFQREGGGNG.

Substrate-binding positions include Ala-19–Ser-28, Asn-110, and His-137–Arg-138. The active site involves Glu-174. Arg-212 is a binding site for substrate. Residue His-248 is part of the active site. Substrate is bound by residues Asp-250 and Asn-359. The active-site Nucleophile is Cys-365.

Belongs to the succinylarginine dihydrolase family. As to quaternary structure, homodimer.

It catalyses the reaction N(2)-succinyl-L-arginine + 2 H2O + 2 H(+) = N(2)-succinyl-L-ornithine + 2 NH4(+) + CO2. It participates in amino-acid degradation; L-arginine degradation via AST pathway; L-glutamate and succinate from L-arginine: step 2/5. Functionally, catalyzes the hydrolysis of N(2)-succinylarginine into N(2)-succinylornithine, ammonia and CO(2). This Escherichia coli O6:H1 (strain CFT073 / ATCC 700928 / UPEC) protein is N-succinylarginine dihydrolase.